The primary structure comprises 108 residues: Iron-sulfur cluster assembly protein CyaY (108 aa).

The protein belongs to the frataxin family.

Involved in iron-sulfur (Fe-S) cluster assembly. May act as a regulator of Fe-S biogenesis. This is Iron-sulfur cluster assembly protein CyaY from Burkholderia vietnamiensis (strain G4 / LMG 22486) (Burkholderia cepacia (strain R1808)).